The sequence spans 94 residues: Integration host factor subunit beta (94 aa).

This sequence belongs to the bacterial histone-like protein family. Heterodimer of an alpha and a beta chain.

Its function is as follows. This protein is one of the two subunits of integration host factor, a specific DNA-binding protein that functions in genetic recombination as well as in transcriptional and translational control. The polypeptide is Integration host factor subunit beta (Nitrosospira multiformis (strain ATCC 25196 / NCIMB 11849 / C 71)).